The sequence spans 82 residues: Small ribosomal subunit protein eS27 (82 aa).

Zn(2+) contacts are provided by Cys-37, Cys-40, Cys-56, and Cys-59.

Belongs to the eukaryotic ribosomal protein eS27 family. As to quaternary structure, component of the small ribosomal subunit. Mature ribosomes consist of a small (40S) and a large (60S) subunit. The 40S subunit contains about 32 different proteins and 1 molecule of RNA (18S). The 60S subunit contains 45 different proteins and 3 molecules of RNA (25S, 5.8S and 5S). Zn(2+) is required as a cofactor.

The protein resides in the cytoplasm. Component of the ribosome, a large ribonucleoprotein complex responsible for the synthesis of proteins in the cell. The small ribosomal subunit (SSU) binds messenger RNAs (mRNAs) and translates the encoded message by selecting cognate aminoacyl-transfer RNA (tRNA) molecules. The large subunit (LSU) contains the ribosomal catalytic site termed the peptidyl transferase center (PTC), which catalyzes the formation of peptide bonds, thereby polymerizing the amino acids delivered by tRNAs into a polypeptide chain. The nascent polypeptides leave the ribosome through a tunnel in the LSU and interact with protein factors that function in enzymatic processing, targeting, and the membrane insertion of nascent chains at the exit of the ribosomal tunnel. This Candida albicans (strain SC5314 / ATCC MYA-2876) (Yeast) protein is Small ribosomal subunit protein eS27 (RPS27).